Reading from the N-terminus, the 209-residue chain is Small ribosomal subunit protein uS3 (209 aa).

The 70-residue stretch at 38–107 (IRKVIKNKYA…RFIVNVEEIK (70 aa)) folds into the KH type-2 domain.

It belongs to the universal ribosomal protein uS3 family. As to quaternary structure, part of the 30S ribosomal subunit. Forms a tight complex with proteins S10 and S14.

Functionally, binds the lower part of the 30S subunit head. Binds mRNA in the 70S ribosome, positioning it for translation. This chain is Small ribosomal subunit protein uS3, found in Thermosipho africanus (strain TCF52B).